The sequence spans 174 residues: B3 domain-containing protein At2g31862 (174 aa).

The TF-B3 DNA-binding region spans 1–71; the sequence is MWVNLSCMCH…KLYIALVPLD (71 aa).

The protein localises to the nucleus. This chain is B3 domain-containing protein At2g31862, found in Arabidopsis thaliana (Mouse-ear cress).